The following is a 408-amino-acid chain: LL-diaminopimelate aminotransferase (408 aa).

Residues tyrosine 15 and glycine 42 each contribute to the substrate site. Pyridoxal 5'-phosphate is bound by residues tyrosine 72, 108 to 109 (SK), tyrosine 132, asparagine 187, tyrosine 218, and 246 to 248 (SFS). 3 residues coordinate substrate: lysine 109, tyrosine 132, and asparagine 187. At lysine 249 the chain carries N6-(pyridoxal phosphate)lysine. Pyridoxal 5'-phosphate is bound by residues arginine 257 and asparagine 291. Positions 291 and 387 each coordinate substrate.

It belongs to the class-I pyridoxal-phosphate-dependent aminotransferase family. LL-diaminopimelate aminotransferase subfamily. Homodimer. Pyridoxal 5'-phosphate is required as a cofactor.

It catalyses the reaction (2S,6S)-2,6-diaminopimelate + 2-oxoglutarate = (S)-2,3,4,5-tetrahydrodipicolinate + L-glutamate + H2O + H(+). It functions in the pathway amino-acid biosynthesis; L-lysine biosynthesis via DAP pathway; LL-2,6-diaminopimelate from (S)-tetrahydrodipicolinate (aminotransferase route): step 1/1. Functionally, involved in the synthesis of meso-diaminopimelate (m-DAP or DL-DAP), required for both lysine and peptidoglycan biosynthesis. Catalyzes the direct conversion of tetrahydrodipicolinate to LL-diaminopimelate. The chain is LL-diaminopimelate aminotransferase from Prochlorococcus marinus (strain NATL2A).